The primary structure comprises 176 residues: Natural cytotoxicity triggering receptor 3 (176 aa).

Residues 1-18 (MAWMLLLILIMVYPGSCA) form the signal peptide. An Ig-like domain is found at 19 to 126 (LWVSQPPEIR…VGTGNGTRLV (108 aa)). Over 19-135 (LWVSQPPEIR…VVEKEYPQLG (117 aa)) the chain is Extracellular. Cys-39 and Cys-108 form a disulfide bridge. 2 N-linked (GlcNAc...) asparagine glycosylation sites follow: Asn-42 and Asn-121. The helical transmembrane segment at 136–156 (AGTVLLLRAGFYAVSFLSVAV) threads the bilayer. At 157-176 (GSTLYYQGKCHCHMGTHCHS) the chain is on the cytoplasmic side.

It belongs to the natural cytotoxicity receptor (NCR) family. In terms of assembly, homodimer in the unliganted form. Interacts with CD3Z. Interacts with and is activated by binding to NCR3LG1. Interacts with and is activated by binding to BAG6. Interacts with and is inhibited by binding to LGALS3.

Its subcellular location is the cell membrane. Functionally, cell membrane receptor of natural killer/NK cells that is activated by binding of extracellular ligands including BAG6 and NCR3LG1. Stimulates NK cells cytotoxicity toward neighboring cells producing these ligands. It controls, for instance, NK cells cytotoxicity against tumor cells. Engagement of NCR3 by BAG6 also promotes myeloid dendritic cells (DC) maturation, both through killing DCs that did not acquire a mature phenotype, and inducing the release by NK cells of TNFA and IFNG that promote DC maturation. This Macaca fascicularis (Crab-eating macaque) protein is Natural cytotoxicity triggering receptor 3 (NCR3).